The sequence spans 496 residues: Glutamyl-tRNA(Gln) amidotransferase subunit A (496 aa).

Catalysis depends on charge relay system residues Lys-75 and Ser-150. The Acyl-ester intermediate role is filled by Ser-174.

This sequence belongs to the amidase family. GatA subfamily. Heterotrimer of A, B and C subunits.

It catalyses the reaction L-glutamyl-tRNA(Gln) + L-glutamine + ATP + H2O = L-glutaminyl-tRNA(Gln) + L-glutamate + ADP + phosphate + H(+). Allows the formation of correctly charged Gln-tRNA(Gln) through the transamidation of misacylated Glu-tRNA(Gln) in organisms which lack glutaminyl-tRNA synthetase. The reaction takes place in the presence of glutamine and ATP through an activated gamma-phospho-Glu-tRNA(Gln). The chain is Glutamyl-tRNA(Gln) amidotransferase subunit A from Burkholderia vietnamiensis (strain G4 / LMG 22486) (Burkholderia cepacia (strain R1808)).